Reading from the N-terminus, the 957-residue chain is Melanoma-associated antigen E1 (957 aa).

A disordered region spans residues 1–433; the sequence is MSLVSQNSRR…RNPSKCSIVL (433 aa). 2 stretches are compositionally biased toward polar residues: residues 85–96 and 104–130; these read SEASSASGQPTV and LLAT…SVTL. The span at 138-156 shows a compositional bias: low complexity; it reads TSRPPTSSEEPSTSVPATP. Composition is skewed to polar residues over residues 158 to 177, 220 to 232, 256 to 306, 328 to 344, 364 to 380, and 414 to 428; these read EGTS…TSVV, LSTS…TEGL, RSTT…GPST, LSTS…STSV, RSTS…DTSV, and TLFS…NPSK. MAGE domains follow at residues 491–690 and 745–936; these read MEQN…YNEA and LESK…YREA. The tract at residues 743 to 957 is interaction with DTNA; that stretch reads SRLESKARKL…HRQFFVHNFR (215 aa).

As to quaternary structure, interacts with DTNA. Interacts with TRIM28.

The protein resides in the cytoplasm. It localises to the perinuclear region. Its subcellular location is the nucleus. It is found in the cell membrane. Its function is as follows. May enhance ubiquitin ligase activity of RING-type zinc finger-containing E3 ubiquitin-protein ligases. Proposed to act through recruitment and/or stabilization of the Ubl-conjugating enzyme (E2) at the E3:substrate complex. The protein is Melanoma-associated antigen E1 (MAGEE1) of Macaca fascicularis (Crab-eating macaque).